The sequence spans 328 residues: D-cysteine desulfhydrase (328 aa).

An N6-(pyridoxal phosphate)lysine modification is found at lysine 51.

It belongs to the ACC deaminase/D-cysteine desulfhydrase family. As to quaternary structure, homodimer. It depends on pyridoxal 5'-phosphate as a cofactor.

The catalysed reaction is D-cysteine + H2O = hydrogen sulfide + pyruvate + NH4(+) + H(+). Catalyzes the alpha,beta-elimination reaction of D-cysteine and of several D-cysteine derivatives. It could be a defense mechanism against D-cysteine. The protein is D-cysteine desulfhydrase of Escherichia coli O7:K1 (strain IAI39 / ExPEC).